The sequence spans 517 residues: Meiosis-specific transcription factor mei4 (517 aa).

A DNA-binding region (fork-head) is located at residues 81 to 172 (KPPCSYATLI…QNFVSVRLHR (92 aa)). The tract at residues 170-278 (LHRSHSTDSN…PNAETQEDLP (109 aa)) is disordered. The span at 209–223 (NSFNSSTSTSGSSSN) shows a compositional bias: low complexity. Polar residues predominate over residues 230-246 (NDASQPSNQDSSLNSNI). Positions 254 to 270 (SNVQSNSSSSENVPKPN) are enriched in low complexity.

It localises to the nucleus. Functionally, functions as a meiosis-specific transcription factor. Binds to the 5'-GTAAAYA-3' consensus sequence of the promoter of the spo6 gene. The chain is Meiosis-specific transcription factor mei4 (mei4) from Schizosaccharomyces pombe (strain 972 / ATCC 24843) (Fission yeast).